We begin with the raw amino-acid sequence, 358 residues long: E3 ubiquitin-protein ligase SIS3 (358 aa).

A signal peptide spans Met1 to Ala27. 3 helical membrane-spanning segments follow: residues Leu40 to Val60, Val85 to Ile105, and Gly125 to Val145. The segment at Cys235–Arg276 adopts an RING-type; atypical zinc-finger fold. The segment at Thr336–Arg358 is disordered.

As to expression, expressed in roots, stems, leaves, flowers and siliques.

The protein localises to the membrane. The catalysed reaction is S-ubiquitinyl-[E2 ubiquitin-conjugating enzyme]-L-cysteine + [acceptor protein]-L-lysine = [E2 ubiquitin-conjugating enzyme]-L-cysteine + N(6)-ubiquitinyl-[acceptor protein]-L-lysine.. The protein operates within protein modification; protein ubiquitination. Its function is as follows. E3 ubiquitin protein ligase that acts as a positive regulator of sugar signaling during early seedling development. Possesses E3 ligase activity in vitro. The protein is E3 ubiquitin-protein ligase SIS3 (SIS3) of Arabidopsis thaliana (Mouse-ear cress).